The primary structure comprises 244 residues: L-xylulose reductase (244 aa).

Met-1 is modified (N-acetylmethionine). 11-39 contributes to the NADP(+) binding site; the sequence is LVTGAGKGIGRSTVLALKAAGAQVVAVSR. Arg-21 carries the omega-N-methylarginine modification. Ser-136 is a substrate binding site. Residue Tyr-149 is the Proton acceptor of the active site. Residue Lys-153 is part of the active site.

This sequence belongs to the short-chain dehydrogenases/reductases (SDR) family. Homotetramer. In terms of tissue distribution, highly expressed in kidney, liver and epididymis. Expressed at intermediate level in lung. Weakly or not expressed in brain, heart, spleen and testis.

The protein localises to the membrane. The protein resides in the apical cell membrane. The catalysed reaction is xylitol + NADP(+) = L-xylulose + NADPH + H(+). In terms of biological role, catalyzes the NADPH-dependent reduction of several pentoses, tetroses, trioses, alpha-dicarbonyl compounds and L-xylulose. Participates in the uronate cycle of glucose metabolism. May play a role in the water absorption and cellular osmoregulation in the proximal renal tubules by producing xylitol, an osmolyte, thereby preventing osmolytic stress from occurring in the renal tubules. This is L-xylulose reductase (Dcxr) from Mus musculus (Mouse).